A 479-amino-acid polypeptide reads, in one-letter code: ATP synthase subunit beta (479 aa).

153 to 160 (GGAGVGKT) is an ATP binding site.

It belongs to the ATPase alpha/beta chains family. As to quaternary structure, F-type ATPases have 2 components, CF(1) - the catalytic core - and CF(0) - the membrane proton channel. CF(1) has five subunits: alpha(3), beta(3), gamma(1), delta(1), epsilon(1). CF(0) has three main subunits: a(1), b(2) and c(9-12). The alpha and beta chains form an alternating ring which encloses part of the gamma chain. CF(1) is attached to CF(0) by a central stalk formed by the gamma and epsilon chains, while a peripheral stalk is formed by the delta and b chains.

It localises to the cell membrane. It carries out the reaction ATP + H2O + 4 H(+)(in) = ADP + phosphate + 5 H(+)(out). Its activity is regulated as follows. Increases 2-fold following exposure to low pH. Produces ATP from ADP in the presence of a proton gradient across the membrane. The catalytic sites are hosted primarily by the beta subunits. The protein is ATP synthase subunit beta of Lactobacillus acidophilus (strain ATCC 700396 / NCK56 / N2 / NCFM).